Here is a 229-residue protein sequence, read N- to C-terminus: NAD-dependent protein deacetylase (229 aa).

One can recognise a Deacetylase sirtuin-type domain in the interval Met-1–Ile-229. NAD(+) is bound by residues Ala-20, Arg-32, Gln-96, Ile-98, Asp-99, His-114, Thr-181, Ser-182, Asn-205, and Val-223. Nicotinamide contacts are provided by Ile-98 and Asp-99. His-114 (proton acceptor) is an active-site residue.

It belongs to the sirtuin family. Class U subfamily.

The protein resides in the cytoplasm. It catalyses the reaction N(6)-acetyl-L-lysyl-[protein] + NAD(+) + H2O = 2''-O-acetyl-ADP-D-ribose + nicotinamide + L-lysyl-[protein]. In terms of biological role, NAD-dependent protein deacetylase which modulates the activities of several enzymes which are inactive in their acetylated form. The polypeptide is NAD-dependent protein deacetylase (Listeria monocytogenes serovar 1/2a (strain ATCC BAA-679 / EGD-e)).